A 227-amino-acid chain; its full sequence is Small ribosomal subunit protein uS3 (227 aa).

The KH type-2 domain occupies V39 to R107.

It belongs to the universal ribosomal protein uS3 family. Part of the 30S ribosomal subunit. Forms a tight complex with proteins S10 and S14.

Its function is as follows. Binds the lower part of the 30S subunit head. Binds mRNA in the 70S ribosome, positioning it for translation. This is Small ribosomal subunit protein uS3 from Hahella chejuensis (strain KCTC 2396).